The sequence spans 377 residues: N-acetyldiaminopimelate deacetylase (377 aa).

Asp70 is a catalytic residue. The Proton acceptor role is filled by Glu129.

This sequence belongs to the peptidase M20A family. N-acetyldiaminopimelate deacetylase subfamily.

The catalysed reaction is N-acetyl-(2S,6S)-2,6-diaminopimelate + H2O = (2S,6S)-2,6-diaminopimelate + acetate. Its pathway is amino-acid biosynthesis; L-lysine biosynthesis via DAP pathway; LL-2,6-diaminopimelate from (S)-tetrahydrodipicolinate (acetylase route): step 3/3. Functionally, catalyzes the conversion of N-acetyl-diaminopimelate to diaminopimelate and acetate. This chain is N-acetyldiaminopimelate deacetylase, found in Streptococcus thermophilus (strain CNRZ 1066).